The following is a 796-amino-acid chain: Cadherin-11 (796 aa).

The N-terminal stretch at 1 to 22 (MKENYCLQAALVCLGMLCHSHA) is a signal peptide. A propeptide spanning residues 23-53 (FAPERRGHLRPSFHGHHEKGKEGQVLQRSKR) is cleaved from the precursor. Cadherin domains follow at residues 54–159 (GWVW…PPEF), 160–268 (LHET…PPKF), 269–383 (PQSV…PPMF), 384–486 (LAPS…DNAP), and 487–612 (KFAA…YILN). The Extracellular portion of the chain corresponds to 54–617 (GWVWNQFFVI…AYILNAGLST (564 aa)). 2 N-linked (GlcNAc...) asparagine glycosylation sites follow: asparagine 455 and asparagine 540. The chain crosses the membrane as a helical span at residues 618-640 (GALIAILACIVILLVIVVLFVTL). The Cytoplasmic portion of the chain corresponds to 641–796 (RRQKKEPLIV…GSKDTFDDDS (156 aa)). Serine 788 bears the Phosphoserine mark. Threonine 791 carries the phosphothreonine modification.

Interacts with PCDH8. In terms of tissue distribution, expressed mainly in brain but also found in other tissues. Expressed in neuroblasts. In the embryo from 67 to 72 days of gestation, detected at high levels in facial mesenchyme including the central palatal mesenchyme, dental mesenchyme, the eye and optic muscle, and the tongue (at protein level).

The protein localises to the cell membrane. In terms of biological role, cadherins are calcium-dependent cell adhesion proteins. They preferentially interact with themselves in a homophilic manner in connecting cells; cadherins may thus contribute to the sorting of heterogeneous cell types. Required for proper focal adhesion assembly. Involved in the regulation of cell migration. The polypeptide is Cadherin-11 (CDH11) (Homo sapiens (Human)).